A 242-amino-acid chain; its full sequence is RNA transcription, translation and transport factor protein (242 aa).

Belongs to the RTRAF family. Homodimer. Component of a tRNA-splicing ligase complex.

It is found in the nucleus. The protein localises to the cytoplasm. Its subcellular location is the cytosol. The protein resides in the perinuclear region. It localises to the cytoskeleton. It is found in the microtubule organizing center. The protein localises to the centrosome. In terms of biological role, RNA-binding protein involved in modulation of mRNA transcription by Polymerase II. Component of the tRNA-splicing ligase complex. The chain is RNA transcription, translation and transport factor protein from Danio rerio (Zebrafish).